Consider the following 480-residue polypeptide: Chromosomal replication initiator protein DnaA (480 aa).

Residues 1–71 form a domain I, interacts with DnaA modulators region; that stretch reads MKEFWQTCVS…EALAAEWYQR (71 aa). The domain II stretch occupies residues 71–142; the sequence is RPVQVTFELP…DAANIVYERS (72 aa). Residues 143 to 359 form a domain III, AAA+ region region; the sequence is RLNTDLTFEN…GALRKVLAYA (217 aa). The ATP site is built by G187, G189, K190, and T191. The segment at 360–480 is domain IV, binds dsDNA; sequence RFHGRDVLTV…LHVLEQTLKG (121 aa).

Belongs to the DnaA family. As to quaternary structure, oligomerizes as a right-handed, spiral filament on DNA at oriC.

It is found in the cytoplasm. Its function is as follows. Plays an essential role in the initiation and regulation of chromosomal replication. ATP-DnaA binds to the origin of replication (oriC) to initiate formation of the DNA replication initiation complex once per cell cycle. Binds the DnaA box (a 9 base pair repeat at the origin) and separates the double-stranded (ds)DNA. Forms a right-handed helical filament on oriC DNA; dsDNA binds to the exterior of the filament while single-stranded (ss)DNA is stabiized in the filament's interior. The ATP-DnaA-oriC complex binds and stabilizes one strand of the AT-rich DNA unwinding element (DUE), permitting loading of DNA polymerase. After initiation quickly degrades to an ADP-DnaA complex that is not apt for DNA replication. Binds acidic phospholipids. The sequence is that of Chromosomal replication initiator protein DnaA from Bordetella bronchiseptica (strain ATCC BAA-588 / NCTC 13252 / RB50) (Alcaligenes bronchisepticus).